Here is a 303-residue protein sequence, read N- to C-terminus: 1D-myo-inositol 2-acetamido-2-deoxy-alpha-D-glucopyranoside deacetylase (303 aa).

Positions 15, 18, and 157 each coordinate Zn(2+).

This sequence belongs to the MshB deacetylase family. It depends on Zn(2+) as a cofactor.

It catalyses the reaction 1D-myo-inositol 2-acetamido-2-deoxy-alpha-D-glucopyranoside + H2O = 1D-myo-inositol 2-amino-2-deoxy-alpha-D-glucopyranoside + acetate. Functionally, catalyzes the deacetylation of 1D-myo-inositol 2-acetamido-2-deoxy-alpha-D-glucopyranoside (GlcNAc-Ins) in the mycothiol biosynthesis pathway. The protein is 1D-myo-inositol 2-acetamido-2-deoxy-alpha-D-glucopyranoside deacetylase of Kribbella flavida (strain DSM 17836 / JCM 10339 / NBRC 14399).